A 200-amino-acid chain; its full sequence is Urease accessory protein UreE (200 aa).

The disordered stretch occupies residues 171–200 (HHGHAHPHPHDHDHQHGPGCAHGRHGHDHH).

The protein belongs to the UreE family.

It localises to the cytoplasm. Involved in urease metallocenter assembly. Binds nickel. Probably functions as a nickel donor during metallocenter assembly. The polypeptide is Urease accessory protein UreE (Burkholderia vietnamiensis (strain G4 / LMG 22486) (Burkholderia cepacia (strain R1808))).